A 580-amino-acid chain; its full sequence is Serine/threonine-protein kinase PINK1, mitochondrial (580 aa).

A mitochondrion-targeting transit peptide spans 1 to 77 (MAVRQALGRG…RFFRQSVAGL (77 aa)). Residues 28-60 (VSGWGKPGPGAAWGRGERPGRVSSPGAQPRPLG) form a disordered region. The chain crosses the membrane as a helical span at residues 94–110 (GPCGRAVFLAFGLGLGL). The interval 111–117 (IEEKQAE) is required for outer membrane localization. The Protein kinase domain occupies 156 to 510 (YLIGQAIGKG…IAANVLHLSL (355 aa)). Residues 162-170 (IGKGCNAAV) and K218 contribute to the ATP site. The residue at position 227 (S227) is a Phosphoserine; by autocatalysis. Residue D361 is the Proton acceptor of the active site. S401 is subject to Phosphoserine; by autocatalysis.

The protein belongs to the protein kinase superfamily. Ser/Thr protein kinase family. As to quaternary structure, upon mitochondrial depolarization, it forms a supercomplex with TOM and TIM23 complexes. PINK1-TOM-TIM23 supercomplex formation requires PINK1 interaction with TOMM20 and TOMM70 and is critical for PINK1 stabilization at the outer mitochondrial membrane, kinase activation and downstream mitophagy. Upon mitochondrial depolarization, interacts with TIMM23; the interaction is required for PINK1 accumulation at the outer mitochondrial membrane, kinase activation by autophosphorylation and PRKN recruitement to mitochondria. Interacts with PRKN. Interacts with FBXO7. Forms a complex with PRKN and PARK7. Interacts with NENF. Mg(2+) is required as a cofactor. In terms of processing, proteolytically cleaved. In healthy cells, the precursor is continuously imported into the inner mitochondrial membrane (IMM), where it is proteolytically cleaved by mitochondrial-processing peptidase (MPP) and then undergoes further proteolytic cleavage by PARL or AFG3L2 to give rise to the 52 kDa short form. The 52 kDa short form is then released into the cytosol where it rapidly undergoes proteasome-dependent degradation. In unhealthy cells, when cellular stress conditions lead to the loss of mitochondrial membrane potential, mitochondrial import is impaired leading to the precursor accumulating on the outer mitochondrial membrane (OMM). If accumulation at the OMM fails and it is imported into the depolarized mitochondria, it undergoes cleavage by the IMM protease OMA1, promoting its subsequent degradation by the proteasome. Post-translationally, autophosphorylated. Loss of mitochondrial membrane potential results in the precursor accumulating on the outer mitochondrial membrane (OMM) where it is activated by autophosphorylation. Autophosphorylation at Ser-227 and Ser-401 is sufficient and essential for selective recruitment of PRKN to depolarized mitochondria, via PINK1-dependent phosphorylation of ubiquitin and maybe PRKN.

It is found in the mitochondrion outer membrane. It localises to the mitochondrion inner membrane. The protein resides in the cytoplasm. Its subcellular location is the cytosol. The catalysed reaction is L-seryl-[protein] + ATP = O-phospho-L-seryl-[protein] + ADP + H(+). The enzyme catalyses L-threonyl-[protein] + ATP = O-phospho-L-threonyl-[protein] + ADP + H(+). In terms of biological role, serine/threonine-protein kinase which acts as a sensor of mitochondrial damage and protects against mitochondrial dysfunction during cellular stress. It phosphorylates mitochondrial proteins to coordinate mitochondrial quality control mechanisms that remove and replace dysfunctional mitochondrial components. Depending on the severity of mitochondrial damage, activity ranges from preventing apoptosis and stimulating mitochondrial biogenesis to eliminating severely damaged mitochondria via PINK1-PRKN-dependent mitophagy. When cellular stress results in irreversible mitochondrial damage, PINK1 accumulates at the outer mitochondrial membrane (OMM) where it phosphorylates pre-existing polyubiquitin chains at 'Ser-65', recruits PRKN from the cytosol to the OMM and activates PRKN by phosphorylation at 'Ser-65'; activated PRKN then ubiquinates VDAC1 and other OMM proteins to initiate mitophagy. The PINK1-PRKN pathway also promotes fission of damaged mitochondria through phosphorylation and PRKN-dependent degradation of mitochondrial proteins involved in fission such as MFN2. This prevents the refusion of unhealthy mitochondria with the mitochondrial network or initiates mitochondrial fragmentation facilitating their later engulfment by autophagosomes. Also promotes mitochondrial fission independently of PRKN and ATG7-mediated mitophagy, via the phosphorylation and activation of DNM1L. Regulates motility of damaged mitochondria by promoting the ubiquitination and subsequent degradation of MIRO1 and MIRO2; in motor neurons, this likely inhibits mitochondrial intracellular anterograde transport along the axons which probably increases the chance of the mitochondria undergoing mitophagy in the soma. Required for ubiquinone reduction by mitochondrial complex I by mediating phosphorylation of complex I subunit NDUFA10. Phosphorylates LETM1, positively regulating its mitochondrial calcium transport activity. This is Serine/threonine-protein kinase PINK1, mitochondrial from Rattus norvegicus (Rat).